A 293-amino-acid polypeptide reads, in one-letter code: Formamidopyrimidine-DNA glycosylase (293 aa).

P2 acts as the Schiff-base intermediate with DNA in catalysis. Catalysis depends on E3, which acts as the Proton donor. K58 (proton donor; for beta-elimination activity) is an active-site residue. Positions 104, 123, and 166 each coordinate DNA. The FPG-type zinc-finger motif lies at 257–293 (KVYDREGETCKTPACGGTIKRFTQNGRSTFWCPKCQK). R283 acts as the Proton donor; for delta-elimination activity in catalysis.

The protein belongs to the FPG family. In terms of assembly, monomer. Requires Zn(2+) as cofactor.

The catalysed reaction is Hydrolysis of DNA containing ring-opened 7-methylguanine residues, releasing 2,6-diamino-4-hydroxy-5-(N-methyl)formamidopyrimidine.. It carries out the reaction 2'-deoxyribonucleotide-(2'-deoxyribose 5'-phosphate)-2'-deoxyribonucleotide-DNA = a 3'-end 2'-deoxyribonucleotide-(2,3-dehydro-2,3-deoxyribose 5'-phosphate)-DNA + a 5'-end 5'-phospho-2'-deoxyribonucleoside-DNA + H(+). Involved in base excision repair of DNA damaged by oxidation or by mutagenic agents. Acts as a DNA glycosylase that recognizes and removes damaged bases. Has a preference for oxidized purines, such as 7,8-dihydro-8-oxoguanine (8-oxoG). Has AP (apurinic/apyrimidinic) lyase activity and introduces nicks in the DNA strand. Cleaves the DNA backbone by beta-delta elimination to generate a single-strand break at the site of the removed base with both 3'- and 5'-phosphates. The polypeptide is Formamidopyrimidine-DNA glycosylase (Bradyrhizobium diazoefficiens (strain JCM 10833 / BCRC 13528 / IAM 13628 / NBRC 14792 / USDA 110)).